Consider the following 776-residue polypeptide: Acetone carboxylase alpha subunit (776 aa).

Heterohexamer of two alpha, two beta and two gamma subunits. The cofactor is Fe cation. Mg(2+) serves as cofactor. Requires Zn(2+) as cofactor. The N-terminus is blocked.

It catalyses the reaction acetone + hydrogencarbonate + 2 ATP + 3 H2O = acetoacetate + 2 AMP + 4 phosphate + 4 H(+). Its function is as follows. Catalyzes the carboxylation of acetone to form acetoacetate. Has a reduced activity on butanone, and no activity on 2-pentatone, 3-pentatone, 2-hexanone, chloroacetone, pyruvate, phosphoenolpyruvate, acetaldehyde, propionaldehyde and propylene oxide. This chain is Acetone carboxylase alpha subunit, found in Xanthobacter autotrophicus (strain ATCC BAA-1158 / Py2).